We begin with the raw amino-acid sequence, 535 residues long: CTP synthase (535 aa).

An amidoligase domain region spans residues 1-267 (MTKYIFVTGG…DKLVCEHMKL (267 aa)). Position 13 (S13) interacts with CTP. Residue S13 coordinates UTP. Residue 14–19 (SLGKGI) coordinates ATP. Residue Y54 coordinates L-glutamine. Position 71 (D71) interacts with ATP. Mg(2+) contacts are provided by D71 and E141. CTP-binding positions include 148–150 (DIE), 188–193 (KTKPTQ), and K224. UTP is bound by residues 188-193 (KTKPTQ) and K224. One can recognise a Glutamine amidotransferase type-1 domain in the interval 292-534 (TIGLVGKYVE…IGASVEAANQ (243 aa)). G354 contacts L-glutamine. C381 serves as the catalytic Nucleophile; for glutamine hydrolysis. L-glutamine-binding positions include 382–385 (LGMQ), E405, and R462. Residues H507 and E509 contribute to the active site.

Belongs to the CTP synthase family. Homotetramer. Interacts with BrxC.

It carries out the reaction UTP + L-glutamine + ATP + H2O = CTP + L-glutamate + ADP + phosphate + 2 H(+). The enzyme catalyses L-glutamine + H2O = L-glutamate + NH4(+). The catalysed reaction is UTP + NH4(+) + ATP = CTP + ADP + phosphate + 2 H(+). It functions in the pathway pyrimidine metabolism; CTP biosynthesis via de novo pathway; CTP from UDP: step 2/2. Allosterically activated by GTP, when glutamine is the substrate; GTP has no effect on the reaction when ammonia is the substrate. The allosteric effector GTP functions by stabilizing the protein conformation that binds the tetrahedral intermediate(s) formed during glutamine hydrolysis. Inhibited by the product CTP, via allosteric rather than competitive inhibition. Functionally, catalyzes the ATP-dependent amination of UTP to CTP with either L-glutamine or ammonia as the source of nitrogen. Regulates intracellular CTP levels through interactions with the four ribonucleotide triphosphates. The chain is CTP synthase from Bacillus subtilis (strain 168).